The primary structure comprises 393 residues: DNA primase small subunit PriS (393 aa).

Residues Asp100, Asp102, and Asp296 contribute to the active site.

It belongs to the eukaryotic-type primase small subunit family. Heterodimer of a small subunit (PriS) and a large subunit (PriL). Mg(2+) is required as a cofactor. Requires Mn(2+) as cofactor.

Functionally, catalytic subunit of DNA primase, an RNA polymerase that catalyzes the synthesis of short RNA molecules used as primers for DNA polymerase during DNA replication. The small subunit contains the primase catalytic core and has DNA synthesis activity on its own. Binding to the large subunit stabilizes and modulates the activity, increasing the rate of DNA synthesis while decreasing the length of the DNA fragments, and conferring RNA synthesis capability. The DNA polymerase activity may enable DNA primase to also catalyze primer extension after primer synthesis. May also play a role in DNA repair. This chain is DNA primase small subunit PriS, found in Natronomonas pharaonis (strain ATCC 35678 / DSM 2160 / CIP 103997 / JCM 8858 / NBRC 14720 / NCIMB 2260 / Gabara) (Halobacterium pharaonis).